The following is a 707-amino-acid chain: Casein kinase 1-like protein HD16 (707 aa).

Positions 19–67 (YDVQDADPAASPVSPAPRGRTGRRGGAAAGRGNKTVAEGGGRKALKPRG) are disordered. Residues 24–37 (ADPAASPVSPAPRG) show a composition bias toward low complexity. A Protein kinase domain is found at 147–425 (YITDRKLGKG…KLISLFDGLI (279 aa)). Residues 153 to 161 (LGKGGFGQV) and K184 contribute to the ATP site. The Proton acceptor role is filled by D276.

It belongs to the protein kinase superfamily. CK1 Ser/Thr protein kinase family. Casein kinase I subfamily. Monomer. Interacts with GHD7 (via C-terminus). Interacts with SLR1. Autophosphorylated. As to expression, expressed in roots, leaves and stems. Expressed in leaf vascular bundles, and proximal regions of the shoot and roots.

Its subcellular location is the cytoplasm. The protein resides in the nucleus. It catalyses the reaction L-seryl-[protein] + ATP = O-phospho-L-seryl-[protein] + ADP + H(+). The enzyme catalyses L-threonyl-[protein] + ATP = O-phospho-L-threonyl-[protein] + ADP + H(+). Casein kinases are operationally defined by their preferential utilization of acidic proteins such as caseins as substrates. It can phosphorylate a large number of proteins. Can phosphorylate casein on threonine residues in vitro. Involved in the regulation of flowering time through gibberellin (GA) signaling, and independently of photoperiod. Phosphorylates the DELLA protein SLR1, stabilizing SLR1 protein and sustaining SLR1 activity as repressor of GA signaling. Required for normal development of male floral organs and grains, through modulation of GA signaling. Targeted and repressed by the homeobox protein HAZ1 during GA signaling. Can phosphorylate phosvitin and SLR1 in vitro. Is not required for clock function in either the presence or the absence of light signals. Involved in a genetic control pathway for photoperiodic flowering under long day (LD) conditions that includes HD1, GHD7, HD5 and HD2. Phosphorylates and activates GHD7, a major floral repressor under LD conditions. Phosphorylation of GHD7 enhances its function in the repression of EHD1, HD3A and HD3B/RFT1, and obviously delaying flowering. The protein is Casein kinase 1-like protein HD16 of Oryza sativa subsp. japonica (Rice).